Reading from the N-terminus, the 243-residue chain is Polycomb group RING finger protein 1 (243 aa).

A Glycyl lysine isopeptide (Lys-Gly) (interchain with G-Cter in SUMO2) cross-link involves residue lysine 12. The RING-type zinc finger occupies cysteine 35–asparagine 74. The segment at asparagine 74–proline 231 is necessary for repressor activity. A Glycyl lysine isopeptide (Lys-Gly) (interchain with G-Cter in SUMO2) cross-link involves residue lysine 76. Residues leucine 138–lysine 239 form a required for the interaction with the KDM2B-SKP1 heterodimeric complex region. Residues glutamate 151–lysine 239 are RING-finger and WD40-associated ubiquitin-like domain (RAWUL); sufficient for interaction with BCOR and BCORL1.

Interacts with BCORL1, forming heterodimers. The PCGF1-BCORL1 heterodimeric complex interacts with the KDM2B-SKP1 heterodimeric complex to form a homotetrameric polycomb repression complex 1 (PRC1.1). Component of the repressive BCOR complex containing a Polycomb group subcomplex at least composed of RYBP, RING1 and RNF2/RING2. Specifically interacts with BCOR, RING1 and RNF2/RING2. Component of a PRC1-like complex. Interacts with CBX6, CBX7 and CBX8. Interacts with DPPA4, NANOG, POU5F1 and RYBP. In terms of tissue distribution, highly expressed in brain, cerebellum, heart and testis.

Its subcellular location is the nucleus. Its function is as follows. Component of the Polycomb group (PcG) multiprotein BCOR complex, a complex required to maintain the transcriptionally repressive state of some genes, such as BCL6 and the cyclin-dependent kinase inhibitor, CDKN1A. Transcriptional repressor that may be targeted to the DNA by BCL6; this transcription repressor activity may be related to PKC signaling pathway. Represses CDKN1A expression by binding to its promoter, and this repression is dependent on the retinoic acid response element (RARE element). Promotes cell cycle progression and enhances cell proliferation as well. May have a positive role in tumor cell growth by down-regulating CDKN1A. Component of a Polycomb group (PcG) multiprotein PRC1-like complex, a complex class required to maintain the transcriptionally repressive state of many genes, including Hox genes, throughout development. PcG PRC1 complex acts via chromatin remodeling and modification of histones; it mediates monoubiquitination of histone H2A 'Lys-119', rendering chromatin heritably changed in its expressibility. Within the PRC1-like complex, regulates RNF2 ubiquitin ligase activity. Regulates the expression of DPPA4 and NANOG in the NT2 embryonic carcinoma cells. The polypeptide is Polycomb group RING finger protein 1 (Pcgf1) (Rattus norvegicus (Rat)).